We begin with the raw amino-acid sequence, 794 residues long: Zinc finger protein 148 (794 aa).

K6 is covalently cross-linked (Glycyl lysine isopeptide (Lys-Gly) (interchain with G-Cter in SUMO2)). S51 is subject to Phosphoserine. Glycyl lysine isopeptide (Lys-Gly) (interchain with G-Cter in SUMO2) cross-links involve residues K88, K115, and K132. Residues 171–193 form a C2H2-type 1 zinc finger; it reads HVCEHCNAAFRTNYHLQRHVFIH. A Phosphothreonine modification is found at T194. 2 consecutive C2H2-type zinc fingers follow at residues 199 to 221 and 227 to 249; these read FQCSQCDMRFIQKYLLQRHEKIH and FRCDECGMRFIQKYHMERHKRTH. S250 bears the Phosphoserine mark. The segment at 255 to 278 adopts a C2H2-type 4 zinc-finger fold; the sequence is YQCEYCLQYFSRTDRVLKHKRMCH. Residue K291 forms a Glycyl lysine isopeptide (Lys-Gly) (interchain with G-Cter in SUMO2) linkage. The segment at 298–336 is disordered; the sequence is EEDSGFSTSPKDNSLPKKKRQKTEKKSSGMDKESALDKS. Residues S301 and S306 each carry the phosphoserine modification. K308 is covalently cross-linked (Glycyl lysine isopeptide (Lys-Gly) (interchain with G-Cter in SUMO2)). Residues 321–336 show a composition bias toward basic and acidic residues; sequence EKKSSGMDKESALDKS. Residue K356 forms a Glycyl lysine isopeptide (Lys-Gly) (interchain with G-Cter in SUMO1); alternate linkage. Residue K356 forms a Glycyl lysine isopeptide (Lys-Gly) (interchain with G-Cter in SUMO2); alternate linkage. Residue K402 forms a Glycyl lysine isopeptide (Lys-Gly) (interchain with G-Cter in SUMO2) linkage. A Phosphoserine modification is found at S412. Glycyl lysine isopeptide (Lys-Gly) (interchain with G-Cter in SUMO2) cross-links involve residues K421 and K424. A compositionally biased stretch (polar residues) spans 574–588; it reads NSSEVPEVTPSENVG. Residues 574-596 are disordered; that stretch reads NSSEVPEVTPSENVGSSSQASSS. Position 607 is an N6-acetyllysine (K607). S665 and S784 each carry phosphoserine.

The protein belongs to the krueppel C2H2-type zinc-finger protein family. As to quaternary structure, interacts with HNRNPDL. Interacts with the 5FMC complex; the interaction requires association with CHTOP. Interacts with CAVIN1. Sumoylated with SUMO2. Desumoylated by SENP3, resulting in the stimulation of transcription of its target genes.

The protein resides in the nucleus. Functionally, involved in transcriptional regulation. Represses the transcription of a number of genes including gastrin, stromelysin and enolase. Binds to the G-rich box in the enhancer region of these genes. The protein is Zinc finger protein 148 (ZNF148) of Homo sapiens (Human).